The following is a 104-amino-acid chain: Transcription elongation factor A protein-like 9 (104 aa).

The interval 1–48 is disordered; the sequence is MKPCQKMEGNLEKEDEPKPEEEPKPEEKPEEGQEPEEEEKSEETFRER. Residues 9–31 show a composition bias toward basic and acidic residues; it reads GNLEKEDEPKPEEEPKPEEKPEE. Residues 32–41 show a composition bias toward acidic residues; the sequence is GQEPEEEEKS.

It belongs to the TFS-II family. TFA subfamily.

The protein resides in the nucleus. Its function is as follows. May be involved in transcriptional regulation. The protein is Transcription elongation factor A protein-like 9 (Tceal9) of Mus musculus (Mouse).